The following is a 289-amino-acid chain: 33 kDa chaperonin (289 aa).

2 disulfides stabilise this stretch: cysteine 235–cysteine 237 and cysteine 268–cysteine 271.

This sequence belongs to the HSP33 family. Post-translationally, under oxidizing conditions two disulfide bonds are formed involving the reactive cysteines. Under reducing conditions zinc is bound to the reactive cysteines and the protein is inactive.

It is found in the cytoplasm. Functionally, redox regulated molecular chaperone. Protects both thermally unfolding and oxidatively damaged proteins from irreversible aggregation. Plays an important role in the bacterial defense system toward oxidative stress. In Bacillus licheniformis (strain ATCC 14580 / DSM 13 / JCM 2505 / CCUG 7422 / NBRC 12200 / NCIMB 9375 / NCTC 10341 / NRRL NRS-1264 / Gibson 46), this protein is 33 kDa chaperonin.